Reading from the N-terminus, the 362-residue chain is Porin Omp2b (362 aa).

The N-terminal stretch at 1–22 is a signal peptide; that stretch reads MNIKSLLLGSAAALVAASGAQA.

It belongs to the alphaproteobacteria porin family. Homotrimer.

It is found in the cell outer membrane. In terms of biological role, forms passive diffusion pores that allow small molecular weight hydrophilic materials across the outer membrane. This Brucella melitensis biotype 1 (strain ATCC 23456 / CCUG 17765 / NCTC 10094 / 16M) protein is Porin Omp2b (omp2b).